Reading from the N-terminus, the 87-residue chain is Acylphosphatase (87 aa).

The region spanning 2–87 is the Acylphosphatase-like domain; that stretch reads RLTALVSGHV…ETGLREFHIY (86 aa). Active-site residues include arginine 17 and asparagine 35.

It belongs to the acylphosphatase family.

It carries out the reaction an acyl phosphate + H2O = a carboxylate + phosphate + H(+). The chain is Acylphosphatase (acyP) from Deinococcus radiodurans (strain ATCC 13939 / DSM 20539 / JCM 16871 / CCUG 27074 / LMG 4051 / NBRC 15346 / NCIMB 9279 / VKM B-1422 / R1).